The primary structure comprises 411 residues: Lycopene beta cyclase (411 aa).

Residue 4–32 (ALVIGSGPAGLAIAAELAQRGLKVQGLSP) coordinates NAD(+).

It belongs to the lycopene cyclase family. The cofactor is FAD.

It catalyses the reaction a carotenoid psi-end group = a carotenoid beta-end derivative. It carries out the reaction all-trans-lycopene = gamma-carotene. The catalysed reaction is gamma-carotene = all-trans-beta-carotene. The enzyme catalyses all-trans-neurosporene = beta-zeacarotene. It functions in the pathway carotenoid biosynthesis; beta-carotene biosynthesis. It participates in carotenoid biosynthesis; beta-zeacarotene biosynthesis. Its activity is regulated as follows. Inhibited by the bleaching herbicide 2-(4-methylphenoxy)triethylamine hydrochloride (MPTA). Functionally, catalyzes the double cyclization reaction which converts lycopene to beta-carotene. It also converts neurosporene to the monocyclic beta-zeacarotene but does not cyclize zeta-carotene. The sequence is that of Lycopene beta cyclase from Synechococcus elongatus (strain ATCC 33912 / PCC 7942 / FACHB-805) (Anacystis nidulans R2).